The chain runs to 82 residues: MTDSSFSVPKPKPLKKGSLVLVNREAYESSLEALASDALPPQYIFEGPGEILMVKGDYAQVRWRRPVPDVWLRIDQLKAWAE.

This sequence belongs to the complex I NdhO subunit family. As to quaternary structure, NDH-1 can be composed of about 15 different subunits; different subcomplexes with different compositions have been identified which probably have different functions.

It is found in the cellular thylakoid membrane. The catalysed reaction is a plastoquinone + NADH + (n+1) H(+)(in) = a plastoquinol + NAD(+) + n H(+)(out). It carries out the reaction a plastoquinone + NADPH + (n+1) H(+)(in) = a plastoquinol + NADP(+) + n H(+)(out). In terms of biological role, NDH-1 shuttles electrons from an unknown electron donor, via FMN and iron-sulfur (Fe-S) centers, to quinones in the respiratory and/or the photosynthetic chain. The immediate electron acceptor for the enzyme in this species is believed to be plastoquinone. Couples the redox reaction to proton translocation, and thus conserves the redox energy in a proton gradient. Cyanobacterial NDH-1 also plays a role in inorganic carbon-concentration. This chain is NAD(P)H-quinone oxidoreductase subunit O, found in Prochlorococcus marinus (strain MIT 9211).